The chain runs to 316 residues: 4-hydroxy-3-methylbut-2-enyl diphosphate reductase (316 aa).

Cysteine 12 provides a ligand contact to [4Fe-4S] cluster. Positions 43 and 81 each coordinate (2E)-4-hydroxy-3-methylbut-2-enyl diphosphate. 2 residues coordinate dimethylallyl diphosphate: histidine 43 and histidine 81. The isopentenyl diphosphate site is built by histidine 43 and histidine 81. Cysteine 103 contributes to the [4Fe-4S] cluster binding site. Histidine 131 is a binding site for (2E)-4-hydroxy-3-methylbut-2-enyl diphosphate. Histidine 131 serves as a coordination point for dimethylallyl diphosphate. Residue histidine 131 participates in isopentenyl diphosphate binding. Glutamate 133 functions as the Proton donor in the catalytic mechanism. Threonine 170 is a (2E)-4-hydroxy-3-methylbut-2-enyl diphosphate binding site. Residue cysteine 198 participates in [4Fe-4S] cluster binding. Serine 226, asparagine 228, and serine 271 together coordinate (2E)-4-hydroxy-3-methylbut-2-enyl diphosphate. Serine 226, asparagine 228, and serine 271 together coordinate dimethylallyl diphosphate. Isopentenyl diphosphate is bound by residues serine 226, asparagine 228, and serine 271.

It belongs to the IspH family. The cofactor is [4Fe-4S] cluster.

It catalyses the reaction isopentenyl diphosphate + 2 oxidized [2Fe-2S]-[ferredoxin] + H2O = (2E)-4-hydroxy-3-methylbut-2-enyl diphosphate + 2 reduced [2Fe-2S]-[ferredoxin] + 2 H(+). The enzyme catalyses dimethylallyl diphosphate + 2 oxidized [2Fe-2S]-[ferredoxin] + H2O = (2E)-4-hydroxy-3-methylbut-2-enyl diphosphate + 2 reduced [2Fe-2S]-[ferredoxin] + 2 H(+). Its pathway is isoprenoid biosynthesis; dimethylallyl diphosphate biosynthesis; dimethylallyl diphosphate from (2E)-4-hydroxy-3-methylbutenyl diphosphate: step 1/1. The protein operates within isoprenoid biosynthesis; isopentenyl diphosphate biosynthesis via DXP pathway; isopentenyl diphosphate from 1-deoxy-D-xylulose 5-phosphate: step 6/6. Its function is as follows. Catalyzes the conversion of 1-hydroxy-2-methyl-2-(E)-butenyl 4-diphosphate (HMBPP) into a mixture of isopentenyl diphosphate (IPP) and dimethylallyl diphosphate (DMAPP). Acts in the terminal step of the DOXP/MEP pathway for isoprenoid precursor biosynthesis. The protein is 4-hydroxy-3-methylbut-2-enyl diphosphate reductase of Geobacillus kaustophilus (strain HTA426).